Consider the following 41-residue polypeptide: Large ribosomal subunit protein bL36 (41 aa).

Belongs to the bacterial ribosomal protein bL36 family.

The sequence is that of Large ribosomal subunit protein bL36 from Vibrio vulnificus (strain YJ016).